We begin with the raw amino-acid sequence, 339 residues long: Fructose-1,6-bisphosphatase class 1 (339 aa).

Mg(2+)-binding residues include E91, D113, L115, and D116. Substrate contacts are provided by residues 116-119, N210, and K276; that span reads DGSS. E282 contributes to the Mg(2+) binding site.

The protein belongs to the FBPase class 1 family. Homotetramer. The cofactor is Mg(2+).

It is found in the cytoplasm. The enzyme catalyses beta-D-fructose 1,6-bisphosphate + H2O = beta-D-fructose 6-phosphate + phosphate. It functions in the pathway carbohydrate biosynthesis; gluconeogenesis. This Bordetella bronchiseptica (strain ATCC BAA-588 / NCTC 13252 / RB50) (Alcaligenes bronchisepticus) protein is Fructose-1,6-bisphosphatase class 1.